We begin with the raw amino-acid sequence, 395 residues long: Phosphoglycerate kinase (395 aa).

Residues 21–23 (DFN), arginine 36, 59–62 (HLGR), arginine 120, and arginine 153 each bind substrate. Residues lysine 203, glutamate 325, and 351–354 (GGDS) contribute to the ATP site.

The protein belongs to the phosphoglycerate kinase family. As to quaternary structure, monomer.

It is found in the cytoplasm. It catalyses the reaction (2R)-3-phosphoglycerate + ATP = (2R)-3-phospho-glyceroyl phosphate + ADP. Its pathway is carbohydrate degradation; glycolysis; pyruvate from D-glyceraldehyde 3-phosphate: step 2/5. This is Phosphoglycerate kinase from Roseiflexus sp. (strain RS-1).